A 306-amino-acid chain; its full sequence is Curved DNA-binding protein (306 aa).

The 65-residue stretch at 5-69 (DYYAIMGVKP…QRRAEYDQLW (65 aa)) folds into the J domain.

The protein resides in the cytoplasm. The protein localises to the nucleoid. Its function is as follows. DNA-binding protein that preferentially recognizes a curved DNA sequence. It is probably a functional analog of DnaJ; displays overlapping activities with DnaJ, but functions under different conditions, probably acting as a molecular chaperone in an adaptive response to environmental stresses other than heat shock. Lacks autonomous chaperone activity; binds native substrates and targets them for recognition by DnaK. Its activity is inhibited by the binding of CbpM. This chain is Curved DNA-binding protein, found in Salmonella paratyphi A (strain ATCC 9150 / SARB42).